We begin with the raw amino-acid sequence, 156 residues long: Arginine repressor (156 aa).

Belongs to the ArgR family.

It localises to the cytoplasm. Its pathway is amino-acid biosynthesis; L-arginine biosynthesis [regulation]. Its function is as follows. Regulates arginine biosynthesis genes. The polypeptide is Arginine repressor (Aeromonas hydrophila subsp. hydrophila (strain ATCC 7966 / DSM 30187 / BCRC 13018 / CCUG 14551 / JCM 1027 / KCTC 2358 / NCIMB 9240 / NCTC 8049)).